The chain runs to 120 residues: Large ribosomal subunit protein bL12 (120 aa).

It belongs to the bacterial ribosomal protein bL12 family. Homodimer. Part of the ribosomal stalk of the 50S ribosomal subunit. Forms a multimeric L10(L12)X complex, where L10 forms an elongated spine to which 2 to 4 L12 dimers bind in a sequential fashion. Binds GTP-bound translation factors.

In terms of biological role, forms part of the ribosomal stalk which helps the ribosome interact with GTP-bound translation factors. Is thus essential for accurate translation. This is Large ribosomal subunit protein bL12 from Brevibacillus brevis (strain 47 / JCM 6285 / NBRC 100599).